Reading from the N-terminus, the 158-residue chain is C-type lectin (158 aa).

Residues Met1 to Cys23 form the signal peptide. Disulfide bonds link Cys26-Cys37, Cys54-Cys154, Cys61-Cys156, and Cys129-Cys146. The region spanning Arg33–Arg155 is the C-type lectin domain. N-linked (GlcNAc...) asparagine glycosylation is found at Asn111 and Asn121. A Mannose-binding motif is present at residues Glu119–Asn121. Ca(2+)-binding residues include Glu127, Asn142, and Asp143.

Belongs to the true venom lectin family. In terms of assembly, homodimer; non-covalently linked. Expressed by the venom gland.

It is found in the secreted. Functionally, mannose-binding lectin which recognizes specific carbohydrate structures and agglutinates a variety of animal cells by binding to cell-surface glycoproteins and glycolipids. May be a calcium-dependent lectin. This is C-type lectin from Micrurus corallinus (Brazilian coral snake).